The following is a 472-amino-acid chain: 4-aminobutyrate aminotransferase (472 aa).

135–136 (GA) contacts pyridoxal 5'-phosphate. R193 contacts substrate. K327 bears the N6-(pyridoxal phosphate)lysine mark. Residue T352 participates in pyridoxal 5'-phosphate binding.

Belongs to the class-III pyridoxal-phosphate-dependent aminotransferase family. Homodimer and homotetramer. The cofactor is pyridoxal 5'-phosphate.

Its subcellular location is the cytoplasm. The enzyme catalyses 4-aminobutanoate + 2-oxoglutarate = succinate semialdehyde + L-glutamate. The protein operates within amino-acid degradation; L-arginine degradation. Its function is as follows. Required for the degradation of gamma-aminobutyric acid (GABA), which is important for utilization of GABA as nitrogen source and for oxidative stress tolerance. Deaminates GABA to succinate semialdehyde, which in turn is converted to succinate by the succinate-semialdehyde dehydrogenase UGA2. May be involved in an alternative, arginase-independent arginine degradation pathway via GABA. This is 4-aminobutyrate aminotransferase from Kluyveromyces lactis (strain ATCC 8585 / CBS 2359 / DSM 70799 / NBRC 1267 / NRRL Y-1140 / WM37) (Yeast).